A 335-amino-acid chain; its full sequence is Prepilin leader peptidase/N-methyltransferase (335 aa).

The helical transmembrane segment at Leu13–Ile33 threads the bilayer. Zn(2+) is bound by residues Cys49, Cys52, Cys74, and Cys77. The next 5 membrane-spanning stretches (helical) occupy residues Trp105 to Ile125, Ile131 to Leu151, Leu206 to Leu226, Pro258 to Ile278, and Ile299 to Leu319.

It belongs to the peptidase A24 family. Zn(2+) is required as a cofactor.

It is found in the cell inner membrane. The enzyme catalyses Typically cleaves a -Gly-|-Phe- bond to release an N-terminal, basic peptide of 5-8 residues from type IV prepilin, and then N-methylates the new N-terminal amino group, the methyl donor being S-adenosyl-L-methionine.. In terms of biological role, plays an essential role in type IV pili and type II pseudopili formation by proteolytically removing the leader sequence from substrate proteins and subsequently monomethylating the alpha-amino group of the newly exposed N-terminal phenylalanine. This Myxococcus xanthus (strain DK1622) protein is Prepilin leader peptidase/N-methyltransferase (pilD).